Reading from the N-terminus, the 82-residue chain is Defensin-like protein 208 (82 aa).

The N-terminal stretch at 1–29 (MAKNLNTVSFTVLLLVLLMASTGILETEA) is a signal peptide. 3 cysteine pairs are disulfide-bonded: Cys38–Cys63, Cys50–Cys76, and Cys54–Cys78.

It belongs to the DEFL family.

It localises to the secreted. This is Defensin-like protein 208 from Arabidopsis thaliana (Mouse-ear cress).